Here is a 360-residue protein sequence, read N- to C-terminus: Phospho-N-acetylmuramoyl-pentapeptide-transferase (360 aa).

10 helical membrane passes run 18 to 38 (VFSYVTFRAILGLLTALVFSL), 73 to 93 (TMGGLLILAGIFVSVLLWGDL), 97 to 117 (YVLVMLFVLGSFGTIGFIDDY), 134 to 154 (YILQSLAALVVAVFLYSSSTL), 168 to 188 (VMPQLGLVFIVLAYFTIVGAS), 199 to 219 (GLAIMPTVMVAGAFALIAYLS), 236 to 256 (AGELVIVCTAIVGAGLGFLWF), 263 to 283 (VFMGDVGSLALGAALGAIAVL), 288 to 308 (ILLVIMGGVFVMETVSVILQV), and 338 to 358 (VIVRFWIISLFLVLLGLATLK).

Belongs to the glycosyltransferase 4 family. MraY subfamily. The cofactor is Mg(2+).

Its subcellular location is the cell inner membrane. It carries out the reaction UDP-N-acetyl-alpha-D-muramoyl-L-alanyl-gamma-D-glutamyl-meso-2,6-diaminopimeloyl-D-alanyl-D-alanine + di-trans,octa-cis-undecaprenyl phosphate = di-trans,octa-cis-undecaprenyl diphospho-N-acetyl-alpha-D-muramoyl-L-alanyl-D-glutamyl-meso-2,6-diaminopimeloyl-D-alanyl-D-alanine + UMP. The protein operates within cell wall biogenesis; peptidoglycan biosynthesis. Catalyzes the initial step of the lipid cycle reactions in the biosynthesis of the cell wall peptidoglycan: transfers peptidoglycan precursor phospho-MurNAc-pentapeptide from UDP-MurNAc-pentapeptide onto the lipid carrier undecaprenyl phosphate, yielding undecaprenyl-pyrophosphoryl-MurNAc-pentapeptide, known as lipid I. The polypeptide is Phospho-N-acetylmuramoyl-pentapeptide-transferase (Shewanella denitrificans (strain OS217 / ATCC BAA-1090 / DSM 15013)).